The primary structure comprises 105 residues: Hydrogen cyanide synthase subunit HcnA (105 aa).

Positions 16-97 constitute a 2Fe-2S ferredoxin-type domain; sequence ADMTISLNGQ…GMQVQTLSNR (82 aa). C60, C65, C68, and C81 together coordinate [2Fe-2S] cluster.

Heterotrimer of HcnA, HcnB and HcnC.

It is found in the cell membrane. It catalyses the reaction glycine + 2 A = hydrogen cyanide + 2 AH2 + CO2. Its function is as follows. A three-component membrane-bound flavoenzyme that catalyzes the formation of hydrogen cyanide, a secondary metabolite, by transfer of electrons to a cyanide-resistant branch of the aerobic respiratory chain. Contributes to suppression of black root rot of tobacco. This is Hydrogen cyanide synthase subunit HcnA from Pseudomonas protegens (strain DSM 19095 / LMG 27888 / CFBP 6595 / CHA0).